Reading from the N-terminus, the 229-residue chain is Transmembrane emp24 domain-containing protein 5 (229 aa).

The first 27 residues, 1–27, serve as a signal peptide directing secretion; the sequence is MGGRMWLPFPVLLLSALPAALLRGAAG. The Lumenal segment spans residues 28-196; the sequence is FTPSLDSDFT…IQESNFDRVN (169 aa). A GOLD domain is found at 45–126; it reads KECFYQPMPL…EKVIFFELIL (82 aa). Residues 197-217 traverse the membrane as a helical segment; that stretch reads FWSVVNLMVMVVVSAIQVYTL. Topologically, residues 218–229 are cytoplasmic; the sequence is KSLFEDKRKSRT.

Belongs to the EMP24/GP25L family. Interacts with TMED9 and TMED10.

Its subcellular location is the endoplasmic reticulum membrane. It localises to the golgi apparatus. The protein localises to the cis-Golgi network membrane. The protein resides in the endoplasmic reticulum-Golgi intermediate compartment membrane. Functionally, potential role in vesicular protein trafficking, mainly in the early secretory pathway. Required for the maintenance of the Golgi apparatus; involved in protein exchange between Golgi stacks during assembly. Probably not required for COPI-vesicle-mediated retrograde transport. The protein is Transmembrane emp24 domain-containing protein 5 (Tmed5) of Mus musculus (Mouse).